Here is a 130-residue protein sequence, read N- to C-terminus: Small ribosomal subunit protein uS8 (130 aa).

This sequence belongs to the universal ribosomal protein uS8 family. In terms of assembly, part of the 30S ribosomal subunit. Contacts proteins S5 and S12.

Functionally, one of the primary rRNA binding proteins, it binds directly to 16S rRNA central domain where it helps coordinate assembly of the platform of the 30S subunit. The protein is Small ribosomal subunit protein uS8 of Pseudoalteromonas atlantica (strain T6c / ATCC BAA-1087).